Consider the following 456-residue polypeptide: MSAQTGTDLFKIADLFAYQVFDSRGFPTVACVVKLASGHTGEAMVPSGASTGEKEAIELRDGDPKAYFGKGVSQAVQNVNQTIAPKLIGLNATDQAAIDALMIQLDGTPNKAKLGANAILAVSLAVAKAAASAQKTSLFKYLANQVMGLNKTEFILTVPMLNVINGGAHADNNIDFQEFMIMPLGANSMHQALKMASETFHALQKLLKQRGLNTNKGDEGGFAPNLKLAEEALDLMVEAIKAAGYQPGSDIAIALDVAASEFYDDTTKRYVFKKGIKAKILDEKEWSLTTAQMIAYLKKLTEQYPIISIEDGLSEHDWEGMETLTKTLGQHIQIVGDDLYCTNPAIAEKGVAHKATNSILIKLNQIGTLTETIKAINIAKDANWSQVISHRSGETEDTTIADLAVAACTGQIKTGSMSRSERIAKYNRLLQIELELGNNAKYLGWNTFKNIKPQKA.

Position 177 (Q177) interacts with (2R)-2-phosphoglycerate. The active-site Proton donor is the E219. Positions 256, 310, and 337 each coordinate Mg(2+). (2R)-2-phosphoglycerate is bound by residues K362, R391, S392, and K413. K362 functions as the Proton acceptor in the catalytic mechanism.

Belongs to the enolase family. As to quaternary structure, homodimer. It depends on Mg(2+) as a cofactor.

Its subcellular location is the cytoplasm. It is found in the secreted. The protein localises to the cell surface. It carries out the reaction (2R)-2-phosphoglycerate = phosphoenolpyruvate + H2O. The protein operates within carbohydrate degradation; glycolysis; pyruvate from D-glyceraldehyde 3-phosphate: step 4/5. Its function is as follows. Catalyzes the reversible conversion of 2-phosphoglycerate (2-PG) into phosphoenolpyruvate (PEP). It is essential for the degradation of carbohydrates via glycolysis. 'Moonlights' as a plasminogen receptor. Binds plasminogen, but no fibronectin binding was observed. Plasminogen binding increases bacterial adherence to host cells; plasmin activity leads to degradation of host extracellular matrix proteins, facilitating bacterial dissemination and disease spread. This is Enolase from Mycoplasma pneumoniae (strain ATCC 29342 / M129 / Subtype 1) (Mycoplasmoides pneumoniae).